Consider the following 189-residue polypeptide: MIQEIMADLSGFLTYARSFRRTGSFVLDACLHCRRCDGCRIWEKTVKHWDVSAISVILTEAGGKLTDLNGVHYYTGLPELVASNGVLHSEILNLLKTVRSTVSRKLIEGKRLESFYFFSLRFAFAIHTRYKIQLHLNPSGDRSWNINSQKASICKGCPSSAHFTETLEFHYGKHHQTYVTKPQQPNQRD.

It belongs to the inositol monophosphatase superfamily.

This is an uncharacterized protein from Leptospira biflexa.